The following is a 146-amino-acid chain: MESDFYLRYYVGHKGKFGHEFLEFEFRPDGKLRYANNSNYKNDVMIRKEAYVHKSVMEELKRIIDDSEITKEDDALWPPPDRVGRQELEIVIGDEHISFTTSKIGSLIDVNQSKDPEGLRVFYYLVQDLKCLVFSLIGLHFKIKPI.

M1 carries the post-translational modification N-acetylmethionine.

Belongs to the mago nashi family. In terms of assembly, heterodimer with RBM8A. Core component of the mRNA splicing-dependent exon junction complex (EJC); the core complex contains CASC3, EIF4A3, MAGOH or MAGOHB, and RBM8A. Component of the ALYREF/THOC4-EJC-RNA complex; in the complex interacts with EIF4A3, RBM8A and THOC4 (via the RRM domain); these interactions are likely specific to RNA-bound EJC. Interacts with PYM1; the interaction is direct and dissociates the EJC from spliced mRNAs. Identified in a complex composed of the EJC core, UPF3B and UPF2. The EJC core can also interact with UPF3A (in vitro). Identified in the spliceosome C complex. Ubiquitous.

Its subcellular location is the nucleus. The protein resides in the nucleus speckle. It is found in the cytoplasm. Functionally, required for pre-mRNA splicing as component of the spliceosome. Plays a redundant role with MAGOHB as core component of the exon junction complex (EJC) and in the nonsense-mediated decay (NMD) pathway. The EJC is a dynamic structure consisting of core proteins and several peripheral nuclear and cytoplasmic associated factors that join the complex only transiently either during EJC assembly or during subsequent mRNA metabolism. The EJC marks the position of the exon-exon junction in the mature mRNA for the gene expression machinery and the core components remain bound to spliced mRNAs throughout all stages of mRNA metabolism thereby influencing downstream processes including nuclear mRNA export, subcellular mRNA localization, translation efficiency and nonsense-mediated mRNA decay (NMD). The MAGOH-RBM8A heterodimer inhibits the ATPase activity of EIF4A3, thereby trapping the ATP-bound EJC core onto spliced mRNA in a stable conformation. The MAGOH-RBM8A heterodimer interacts with the EJC key regulator PYM1 leading to EJC disassembly in the cytoplasm and translation enhancement of EJC-bearing spliced mRNAs by recruiting them to the ribosomal 48S pre-initiation complex. Involved in the splicing modulation of BCL2L1/Bcl-X (and probably other apoptotic genes); specifically inhibits formation of proapoptotic isoforms such as Bcl-X(S); the function is different from the established EJC assembly. This is Protein mago nashi homolog (MAGOH) from Homo sapiens (Human).